The sequence spans 309 residues: MRKIIVGSRKSKLALTQTNWFIDQLKALGLPYEFEVKEIVTKGDVILDVTLSKVGGKGLFVKEIEHALLTKEIDMAVHSMKDMPAVLPDGLTIGCTPKRVDPRDAFISKNGESFKDLAEGAILGTSSLRRSAQLLAARPDLQVKWIRGNIDTRLRKLKDEDYDAIILATAGLQRMGWDGEVITEHLDETLCVPAVGQGALAIECREDDTDLLQLLAHINDAVTERTVAAERVFLHKLEGGCQVPIAGYATLKENDAIELTALVGSMDGSVLLKEIVVGIDPKQVGLEAADRLIKQGAKELILAANKEQQ.

An S-(dipyrrolylmethanemethyl)cysteine modification is found at Cys241.

This sequence belongs to the HMBS family. In terms of assembly, monomer. Dipyrromethane is required as a cofactor.

It catalyses the reaction 4 porphobilinogen + H2O = hydroxymethylbilane + 4 NH4(+). It participates in porphyrin-containing compound metabolism; protoporphyrin-IX biosynthesis; coproporphyrinogen-III from 5-aminolevulinate: step 2/4. Functionally, tetrapolymerization of the monopyrrole PBG into the hydroxymethylbilane pre-uroporphyrinogen in several discrete steps. The sequence is that of Porphobilinogen deaminase from Bacillus mycoides (strain KBAB4) (Bacillus weihenstephanensis).